A 376-amino-acid chain; its full sequence is Chaperone protein DnaJ (376 aa).

In terms of domain architecture, J spans 4 to 68 (DYYEILGVAR…ETRARYDRFG (65 aa)). The disordered stretch occupies residues 102–121 (GGMGGPTQQRRRGGPARGDD). The CR-type zinc finger occupies 136 to 218 (GGEKEIRISH…CDGKGTNQVT (83 aa)). Zn(2+) contacts are provided by Cys-149, Cys-152, Cys-166, Cys-169, Cys-192, Cys-195, Cys-206, and Cys-209. 4 CXXCXGXG motif repeats span residues 149–156 (CETCSGSG), 166–173 (CSTCSGSG), 192–199 (CPTCNGTG), and 206–213 (CDACDGKG).

This sequence belongs to the DnaJ family. In terms of assembly, homodimer. Zn(2+) is required as a cofactor.

The protein resides in the cytoplasm. Participates actively in the response to hyperosmotic and heat shock by preventing the aggregation of stress-denatured proteins and by disaggregating proteins, also in an autonomous, DnaK-independent fashion. Unfolded proteins bind initially to DnaJ; upon interaction with the DnaJ-bound protein, DnaK hydrolyzes its bound ATP, resulting in the formation of a stable complex. GrpE releases ADP from DnaK; ATP binding to DnaK triggers the release of the substrate protein, thus completing the reaction cycle. Several rounds of ATP-dependent interactions between DnaJ, DnaK and GrpE are required for fully efficient folding. Also involved, together with DnaK and GrpE, in the DNA replication of plasmids through activation of initiation proteins. The protein is Chaperone protein DnaJ of Trichormus variabilis (strain ATCC 29413 / PCC 7937) (Anabaena variabilis).